A 156-amino-acid polypeptide reads, in one-letter code: Phytohormone-binding protein (156 aa).

The gibberellin A3 site is built by Gln-22, Gln-68, and Thr-141.

It belongs to the BetVI family.

In terms of biological role, binds gibberellin A3 (GA3) in vitro. This Medicago truncatula (Barrel medic) protein is Phytohormone-binding protein.